Here is a 523-residue protein sequence, read N- to C-terminus: 2-isopropylmalate synthase (523 aa).

The Pyruvate carboxyltransferase domain occupies 5 to 267 (VIIFDTTLRD…HTRINHQEIW (263 aa)). Positions 14, 202, 204, and 238 each coordinate Mn(2+). A regulatory domain region spans residues 392–523 (RLEYFSVQSG…QNKEHNQETV (132 aa)).

Belongs to the alpha-IPM synthase/homocitrate synthase family. LeuA type 1 subfamily. In terms of assembly, homodimer. It depends on Mn(2+) as a cofactor.

It is found in the cytoplasm. It carries out the reaction 3-methyl-2-oxobutanoate + acetyl-CoA + H2O = (2S)-2-isopropylmalate + CoA + H(+). Its pathway is amino-acid biosynthesis; L-leucine biosynthesis; L-leucine from 3-methyl-2-oxobutanoate: step 1/4. Functionally, catalyzes the condensation of the acetyl group of acetyl-CoA with 3-methyl-2-oxobutanoate (2-ketoisovalerate) to form 3-carboxy-3-hydroxy-4-methylpentanoate (2-isopropylmalate). In Cronobacter sakazakii (strain ATCC BAA-894) (Enterobacter sakazakii), this protein is 2-isopropylmalate synthase.